A 197-amino-acid polypeptide reads, in one-letter code: 3-isopropylmalate dehydratase small subunit (197 aa).

It belongs to the LeuD family. LeuD type 1 subfamily. As to quaternary structure, heterodimer of LeuC and LeuD.

The enzyme catalyses (2R,3S)-3-isopropylmalate = (2S)-2-isopropylmalate. It functions in the pathway amino-acid biosynthesis; L-leucine biosynthesis; L-leucine from 3-methyl-2-oxobutanoate: step 2/4. In terms of biological role, catalyzes the isomerization between 2-isopropylmalate and 3-isopropylmalate, via the formation of 2-isopropylmaleate. The sequence is that of 3-isopropylmalate dehydratase small subunit from Corynebacterium glutamicum (strain R).